Reading from the N-terminus, the 229-residue chain is Flagellar L-ring protein (229 aa).

The N-terminal stretch at 1–23 (MNPLTRVALAVAAFAALVLALSA) is a signal peptide. C24 carries the N-palmitoyl cysteine lipid modification. C24 carries the S-diacylglycerol cysteine lipid modification.

It belongs to the FlgH family. In terms of assembly, the basal body constitutes a major portion of the flagellar organelle and consists of four rings (L,P,S, and M) mounted on a central rod.

Its subcellular location is the cell outer membrane. The protein resides in the bacterial flagellum basal body. Functionally, assembles around the rod to form the L-ring and probably protects the motor/basal body from shearing forces during rotation. The sequence is that of Flagellar L-ring protein from Anaeromyxobacter dehalogenans (strain 2CP-1 / ATCC BAA-258).